Reading from the N-terminus, the 98-residue chain is Large ribosomal subunit protein uL23 (98 aa).

Belongs to the universal ribosomal protein uL23 family. Part of the 50S ribosomal subunit. Contacts protein L29, and trigger factor when it is bound to the ribosome.

In terms of biological role, one of the early assembly proteins it binds 23S rRNA. One of the proteins that surrounds the polypeptide exit tunnel on the outside of the ribosome. Forms the main docking site for trigger factor binding to the ribosome. The chain is Large ribosomal subunit protein uL23 from Limosilactobacillus reuteri (strain DSM 20016) (Lactobacillus reuteri).